We begin with the raw amino-acid sequence, 316 residues long: Transaldolase 2 (316 aa).

The Schiff-base intermediate with substrate role is filled by lysine 131.

Belongs to the transaldolase family. Type 1 subfamily. In terms of assembly, homodimer.

The protein localises to the cytoplasm. The catalysed reaction is D-sedoheptulose 7-phosphate + D-glyceraldehyde 3-phosphate = D-erythrose 4-phosphate + beta-D-fructose 6-phosphate. Its pathway is carbohydrate degradation; pentose phosphate pathway; D-glyceraldehyde 3-phosphate and beta-D-fructose 6-phosphate from D-ribose 5-phosphate and D-xylulose 5-phosphate (non-oxidative stage): step 2/3. Transaldolase is important for the balance of metabolites in the pentose-phosphate pathway. The sequence is that of Transaldolase 2 from Salmonella choleraesuis (strain SC-B67).